A 518-amino-acid polypeptide reads, in one-letter code: Sodium-dependent glucose transporter 1 (518 aa).

The next 12 membrane-spanning stretches (helical) occupy residues 19–39, 53–73, 82–102, 107–127, 139–159, 221–241, 307–327, 347–367, 376–396, 400–420, 438–458, and 466–486; these read TFQD…FIFV, GFLV…SATT, CKTA…IGIL, NVLI…ALHF, LAKL…SDFH, FRRA…FFFY, TSSL…IATS, YTTI…LGEM, LQGK…ASIA, LFPV…KEDR, EEEN…EMIE, and SIIE…YNQY. The span at 414–426 shows a compositional bias: basic and acidic residues; sequence RQRKEDRKSEDQK. Positions 414 to 448 are disordered; sequence RQRKEDRKSEDQKALLSSSGLNEYEEENEEEDAEK. Positions 436–448 are enriched in acidic residues; it reads EYEEENEEEDAEK.

This sequence belongs to the major facilitator superfamily.

It localises to the apical cell membrane. Its function is as follows. May function as a sodium-dependent glucose transporter. Potential channels for urea in the inner medulla of kidney. The chain is Sodium-dependent glucose transporter 1 from Homo sapiens (Human).